The following is a 378-amino-acid chain: Chaperone protein DnaJ (378 aa).

The 66-residue stretch at 5 to 70 folds into the J domain; the sequence is DYYESLGVAK…QKRAAYDQYG (66 aa). The CR-type zinc finger occupies 133 to 211; it reads GVTKEIRIPA…CHGHGRVEKS (79 aa). Residues Cys-146, Cys-149, Cys-163, Cys-166, Cys-185, Cys-188, Cys-199, and Cys-202 each coordinate Zn(2+). CXXCXGXG motif repeat units lie at residues 146 to 153, 163 to 170, 185 to 192, and 199 to 206; these read CDVCHGNG, CPTCHGNG, CPHCHGRG, and CVKCHGHG.

This sequence belongs to the DnaJ family. In terms of assembly, homodimer. Requires Zn(2+) as cofactor.

The protein localises to the cytoplasm. Its function is as follows. Participates actively in the response to hyperosmotic and heat shock by preventing the aggregation of stress-denatured proteins and by disaggregating proteins, also in an autonomous, DnaK-independent fashion. Unfolded proteins bind initially to DnaJ; upon interaction with the DnaJ-bound protein, DnaK hydrolyzes its bound ATP, resulting in the formation of a stable complex. GrpE releases ADP from DnaK; ATP binding to DnaK triggers the release of the substrate protein, thus completing the reaction cycle. Several rounds of ATP-dependent interactions between DnaJ, DnaK and GrpE are required for fully efficient folding. Also involved, together with DnaK and GrpE, in the DNA replication of plasmids through activation of initiation proteins. This is Chaperone protein DnaJ from Pectobacterium carotovorum subsp. carotovorum (strain PC1).